The chain runs to 637 residues: Sodium-dependent proline transporter (637 aa).

The Cytoplasmic portion of the chain corresponds to 1 to 45 (MKKLQEAHLRKPVTPDLLMTPSDQGDVDLDVDFAADRGNWTGKLD). Threonine 20 bears the Phosphothreonine mark. A Phosphoserine modification is found at serine 22. Transmembrane regions (helical) follow at residues 46–66 (FLLSCIGYCVGLGNVWRFPYR), 74–93 (AFLVPYFLMLAICGIPLFFL), and 117–137 (GAGAAMLLIVGLVAIYYNMII). The Extracellular segment spans residues 138-214 (AYVLFYLFAS…QGIGRPGEIR (77 aa)). N-linked (GlcNAc...) asparagine glycosylation is present at asparagine 182. 9 helical membrane-spanning segments follow: residues 215–233 (WNLCLCLLLAWVIVFLCIL), 242–259 (VVYFTATFPYLILLMLLV), 295–312 (IFYSLGVGFGGLLTFASY), 324–345 (FIVTLGNAITSILAGFAIFSVL), 378–397 (LPLSPFWSFLFFFMLLTLGL), 425–443 (VFSGLICVAMYLMGLILTT), 459–479 (SFGLMVVVITTCLAVTRVYGI), 500–519 (ACWLFLSPATLLALLVYSIV), and 538–556 (LGILMGLLSCLMIPAGMLV). The Cytoplasmic portion of the chain corresponds to 557-637 (AVLREEGSLW…IAEEEEESMM (81 aa)). Phosphoserine occurs at positions 573 and 582. Phosphothreonine is present on threonine 588. Residue tyrosine 591 is modified to Phosphotyrosine. Residues serine 598 and serine 600 each carry the phosphoserine modification.

This sequence belongs to the sodium:neurotransmitter symporter (SNF) (TC 2.A.22) family. SLC6A7 subfamily. In terms of tissue distribution, expressed in subpopulations of putative glutamatergic pathways of rat brain.

The protein localises to the synaptic cell membrane. It carries out the reaction L-proline(out) + chloride(out) + 2 Na(+)(out) = L-proline(in) + chloride(in) + 2 Na(+)(in). The catalysed reaction is L-pipecolate(out) + chloride(out) + 2 Na(+)(out) = L-pipecolate(in) + chloride(in) + 2 Na(+)(in). In terms of biological role, brain specific sodium (and chloride)-dependent proline transporter. Terminates the action of proline by its high affinity sodium-dependent reuptake into presynaptic terminals. The sequence is that of Sodium-dependent proline transporter (Slc6a7) from Rattus norvegicus (Rat).